A 334-amino-acid chain; its full sequence is MKAIEWRDNRLIILDQTLLPLEEKYLELNDYHAVAEAIKTLRVRGAPSIGVAAAYGIALGALGIETQYCSEFLPLYQQVSAEIASTRPTAKNLFMAAERMDHVVASGTDVSQVKISLVEEAVKIHHEEEEASRKISAFGAELIQPGWTVLTHCNAGPLATAGYGTALGVIIAAHQQGKNISAFATETRPLLQGARLTALELKEAGIPFKLITDSMAGHFMQKGVINAVVVGADRIAKNGDTANKIGTYSLAVLALAHGIPFYVAAPSSTFDKSIESGRDIVIEERKPEEITQIRGQRIAPENIAVANPAFDVTPANLITAFITENGIIRREAKN.

Substrate is bound by residues 44–46 (RGA), arginine 87, and glutamine 192. Aspartate 233 (proton donor) is an active-site residue. 243-244 (NK) serves as a coordination point for substrate.

It belongs to the eIF-2B alpha/beta/delta subunits family. MtnA subfamily.

It catalyses the reaction 5-(methylsulfanyl)-alpha-D-ribose 1-phosphate = 5-(methylsulfanyl)-D-ribulose 1-phosphate. Its pathway is amino-acid biosynthesis; L-methionine biosynthesis via salvage pathway; L-methionine from S-methyl-5-thio-alpha-D-ribose 1-phosphate: step 1/6. Its function is as follows. Catalyzes the interconversion of methylthioribose-1-phosphate (MTR-1-P) into methylthioribulose-1-phosphate (MTRu-1-P). This Dehalococcoides mccartyi (strain ATCC BAA-2266 / KCTC 15142 / 195) (Dehalococcoides ethenogenes (strain 195)) protein is Methylthioribose-1-phosphate isomerase.